The sequence spans 239 residues: ATP synthase subunit a (239 aa).

5 helical membrane-spanning segments follow: residues 27 to 47 (GQVF…VVLG), 86 to 106 (LPFI…GALI), 125 to 145 (INTT…AGLS), 190 to 210 (LAVA…VMLL), and 211 to 231 (GLFT…FYIG).

It belongs to the ATPase A chain family. In terms of assembly, F-type ATPases have 2 components, CF(1) - the catalytic core - and CF(0) - the membrane proton channel. CF(1) has five subunits: alpha(3), beta(3), gamma(1), delta(1), epsilon(1). CF(0) has four main subunits: a, b, b' and c.

It localises to the cellular thylakoid membrane. Its function is as follows. Key component of the proton channel; it plays a direct role in the translocation of protons across the membrane. This chain is ATP synthase subunit a, found in Synechococcus sp. (strain RCC307).